The following is a 145-amino-acid chain: D-aminoacyl-tRNA deacylase (145 aa).

The short motif at 137-138 (GP) is the Gly-cisPro motif, important for rejection of L-amino acids element.

It belongs to the DTD family. In terms of assembly, homodimer.

It localises to the cytoplasm. The catalysed reaction is glycyl-tRNA(Ala) + H2O = tRNA(Ala) + glycine + H(+). It carries out the reaction a D-aminoacyl-tRNA + H2O = a tRNA + a D-alpha-amino acid + H(+). An aminoacyl-tRNA editing enzyme that deacylates mischarged D-aminoacyl-tRNAs. Also deacylates mischarged glycyl-tRNA(Ala), protecting cells against glycine mischarging by AlaRS. Acts via tRNA-based rather than protein-based catalysis; rejects L-amino acids rather than detecting D-amino acids in the active site. By recycling D-aminoacyl-tRNA to D-amino acids and free tRNA molecules, this enzyme counteracts the toxicity associated with the formation of D-aminoacyl-tRNA entities in vivo and helps enforce protein L-homochirality. This is D-aminoacyl-tRNA deacylase from Escherichia coli O7:K1 (strain IAI39 / ExPEC).